The chain runs to 41 residues: Photosystem I reaction center subunit IX (41 aa).

The helical transmembrane segment at 7-27 (YLSTAPVVAAAWFTFTAGLLI) threads the bilayer.

The protein belongs to the PsaJ family.

It localises to the plastid. The protein resides in the chloroplast thylakoid membrane. May help in the organization of the PsaE and PsaF subunits. The protein is Photosystem I reaction center subunit IX of Oltmannsiellopsis viridis (Marine flagellate).